The sequence spans 205 residues: NAD(P)H dehydrogenase (quinone) (205 aa).

The region spanning Val-3–Val-194 is the Flavodoxin-like domain. FMN is bound by residues Ser-9–Ile-14 and Thr-82–Phe-84. Tyr-11 contributes to the NAD(+) binding site. A substrate-binding site is contributed by Trp-102. His-138 is a binding site for FMN.

Belongs to the WrbA family. Requires FMN as cofactor.

It catalyses the reaction a quinone + NADH + H(+) = a quinol + NAD(+). The catalysed reaction is a quinone + NADPH + H(+) = a quinol + NADP(+). This chain is NAD(P)H dehydrogenase (quinone), found in Geotalea daltonii (strain DSM 22248 / JCM 15807 / FRC-32) (Geobacter daltonii).